A 720-amino-acid chain; its full sequence is 1,4-alpha-glucan branching enzyme GlgB 2 (720 aa).

D398 acts as the Nucleophile in catalysis. E451 functions as the Proton donor in the catalytic mechanism.

It belongs to the glycosyl hydrolase 13 family. GlgB subfamily. As to quaternary structure, monomer.

It carries out the reaction Transfers a segment of a (1-&gt;4)-alpha-D-glucan chain to a primary hydroxy group in a similar glucan chain.. It participates in glycan biosynthesis; glycogen biosynthesis. In terms of biological role, catalyzes the formation of the alpha-1,6-glucosidic linkages in glycogen by scission of a 1,4-alpha-linked oligosaccharide from growing alpha-1,4-glucan chains and the subsequent attachment of the oligosaccharide to the alpha-1,6 position. This is 1,4-alpha-glucan branching enzyme GlgB 2 from Xanthomonas oryzae pv. oryzae (strain KACC10331 / KXO85).